A 303-amino-acid chain; its full sequence is Mycothiol acetyltransferase (303 aa).

D33 provides a ligand contact to 1D-myo-inositol 2-(L-cysteinylamino)-2-deoxy-alpha-D-glucopyranoside. Acetyl-CoA-binding positions include 78 to 80 (VVV) and 86 to 91 (RRGTGS). One can recognise an N-acetyltransferase domain in the interval 150 to 303 (VRFATYSGPH…AYAAVAPTDV (154 aa)). The 1D-myo-inositol 2-(L-cysteinylamino)-2-deoxy-alpha-D-glucopyranoside site is built by E177, K218, and E226. 230–232 (VGV) lines the acetyl-CoA pocket. Y269 is a binding site for 1D-myo-inositol 2-(L-cysteinylamino)-2-deoxy-alpha-D-glucopyranoside. Acetyl-CoA is bound at residue 274 to 279 (NTAAVK).

This sequence belongs to the acetyltransferase family. MshD subfamily. As to quaternary structure, monomer.

The catalysed reaction is 1D-myo-inositol 2-(L-cysteinylamino)-2-deoxy-alpha-D-glucopyranoside + acetyl-CoA = mycothiol + CoA + H(+). In terms of biological role, catalyzes the transfer of acetyl from acetyl-CoA to desacetylmycothiol (Cys-GlcN-Ins) to form mycothiol. In Mycolicibacterium gilvum (strain PYR-GCK) (Mycobacterium gilvum (strain PYR-GCK)), this protein is Mycothiol acetyltransferase.